Reading from the N-terminus, the 263-residue chain is 3'-5' ssDNA/RNA exonuclease TatD (263 aa).

Positions 91, 127, and 152 each coordinate a divalent metal cation.

It belongs to the metallo-dependent hydrolases superfamily. TatD-type hydrolase family. TatD subfamily. In terms of assembly, monomer. Requires Mg(2+) as cofactor.

The protein localises to the cytoplasm. Functionally, 3'-5' exonuclease that prefers single-stranded DNA and RNA. May play a role in the H(2)O(2)-induced DNA damage repair. This Cronobacter turicensis (strain DSM 18703 / CCUG 55852 / LMG 23827 / z3032) protein is 3'-5' ssDNA/RNA exonuclease TatD.